A 449-amino-acid chain; its full sequence is tRNA (guanine(37)-N(1))-methyltransferase (449 aa).

S-adenosyl-L-methionine-binding positions include histidine 216, 254 to 255 (DL), 282 to 283 (DG), and asparagine 345.

The protein belongs to the class I-like SAM-binding methyltransferase superfamily. TRM5/TYW2 family. In terms of assembly, monomer.

The protein localises to the mitochondrion matrix. The protein resides in the nucleus. Its subcellular location is the cytoplasm. It carries out the reaction guanosine(37) in tRNA + S-adenosyl-L-methionine = N(1)-methylguanosine(37) in tRNA + S-adenosyl-L-homocysteine + H(+). Specifically methylates the N1 position of guanosine-37 in various cytoplasmic and mitochondrial tRNAs. Methylation is not dependent on the nature of the nucleoside 5' of the target nucleoside. This is the first step in the biosynthesis of wybutosine (yW), a modified base adjacent to the anticodon of tRNAs and required for accurate decoding. This is tRNA (guanine(37)-N(1))-methyltransferase from Candida albicans (strain WO-1) (Yeast).